A 129-amino-acid polypeptide reads, in one-letter code: UPF0212 protein MM_2357 (129 aa).

Belongs to the UPF0212 family.

The protein is UPF0212 protein MM_2357 of Methanosarcina mazei (strain ATCC BAA-159 / DSM 3647 / Goe1 / Go1 / JCM 11833 / OCM 88) (Methanosarcina frisia).